Consider the following 339-residue polypeptide: Ketol-acid reductoisomerase (NADP(+)) (339 aa).

The region spanning 1 to 182 is the KARI N-terminal Rossmann domain; it reads MRVYYDRDAD…GGGRSGVIET (182 aa). NADP(+) is bound by residues 24–27, arginine 48, serine 51, threonine 53, and 83–86; these read YGSQ and DELQ. Residue histidine 108 is part of the active site. Glycine 134 is a binding site for NADP(+). The 146-residue stretch at 183-328 folds into the KARI C-terminal knotted domain; sequence TFKEECETDL…EKLRGMMPWI (146 aa). Residues aspartate 191, glutamate 195, glutamate 227, and glutamate 231 each coordinate Mg(2+). Substrate is bound at residue serine 252.

The protein belongs to the ketol-acid reductoisomerase family. The cofactor is Mg(2+).

The enzyme catalyses (2R)-2,3-dihydroxy-3-methylbutanoate + NADP(+) = (2S)-2-acetolactate + NADPH + H(+). It carries out the reaction (2R,3R)-2,3-dihydroxy-3-methylpentanoate + NADP(+) = (S)-2-ethyl-2-hydroxy-3-oxobutanoate + NADPH + H(+). It functions in the pathway amino-acid biosynthesis; L-isoleucine biosynthesis; L-isoleucine from 2-oxobutanoate: step 2/4. It participates in amino-acid biosynthesis; L-valine biosynthesis; L-valine from pyruvate: step 2/4. Its function is as follows. Involved in the biosynthesis of branched-chain amino acids (BCAA). Catalyzes an alkyl-migration followed by a ketol-acid reduction of (S)-2-acetolactate (S2AL) to yield (R)-2,3-dihydroxy-isovalerate. In the isomerase reaction, S2AL is rearranged via a Mg-dependent methyl migration to produce 3-hydroxy-3-methyl-2-ketobutyrate (HMKB). In the reductase reaction, this 2-ketoacid undergoes a metal-dependent reduction by NADPH to yield (R)-2,3-dihydroxy-isovalerate. The protein is Ketol-acid reductoisomerase (NADP(+)) of Brucella anthropi (strain ATCC 49188 / DSM 6882 / CCUG 24695 / JCM 21032 / LMG 3331 / NBRC 15819 / NCTC 12168 / Alc 37) (Ochrobactrum anthropi).